Consider the following 171-residue polypeptide: Large ribosomal subunit protein bL9 (171 aa).

The protein belongs to the bacterial ribosomal protein bL9 family.

Functionally, binds to the 23S rRNA. The chain is Large ribosomal subunit protein bL9 from Rickettsia akari (strain Hartford).